The primary structure comprises 73 residues: Methionyl-tRNA formyltransferase (73 aa).

The protein belongs to the Fmt family.

The catalysed reaction is L-methionyl-tRNA(fMet) + (6R)-10-formyltetrahydrofolate = N-formyl-L-methionyl-tRNA(fMet) + (6S)-5,6,7,8-tetrahydrofolate + H(+). In terms of biological role, attaches a formyl group to the free amino group of methionyl-tRNA(fMet). The formyl group appears to play a dual role in the initiator identity of N-formylmethionyl-tRNA by promoting its recognition by IF2 and preventing the misappropriation of this tRNA by the elongation apparatus. This is Methionyl-tRNA formyltransferase (fmt) from Rickettsia rickettsii.